Consider the following 298-residue polypeptide: GTP cyclohydrolase FolE2 (298 aa).

This sequence belongs to the GTP cyclohydrolase IV family.

It catalyses the reaction GTP + H2O = 7,8-dihydroneopterin 3'-triphosphate + formate + H(+). The protein operates within cofactor biosynthesis; 7,8-dihydroneopterin triphosphate biosynthesis; 7,8-dihydroneopterin triphosphate from GTP: step 1/1. Converts GTP to 7,8-dihydroneopterin triphosphate. In Xylella fastidiosa (strain M12), this protein is GTP cyclohydrolase FolE2.